A 492-amino-acid polypeptide reads, in one-letter code: Protein nucleotidyltransferase YdiU (492 aa).

ATP is bound by residues glycine 94, glycine 96, arginine 97, lysine 117, aspartate 129, glycine 130, arginine 180, and arginine 187. The active-site Proton acceptor is the aspartate 257. Mg(2+) contacts are provided by asparagine 258 and aspartate 267. Position 267 (aspartate 267) interacts with ATP.

It belongs to the SELO family. Mg(2+) serves as cofactor. Requires Mn(2+) as cofactor.

The enzyme catalyses L-seryl-[protein] + ATP = 3-O-(5'-adenylyl)-L-seryl-[protein] + diphosphate. It carries out the reaction L-threonyl-[protein] + ATP = 3-O-(5'-adenylyl)-L-threonyl-[protein] + diphosphate. The catalysed reaction is L-tyrosyl-[protein] + ATP = O-(5'-adenylyl)-L-tyrosyl-[protein] + diphosphate. It catalyses the reaction L-histidyl-[protein] + UTP = N(tele)-(5'-uridylyl)-L-histidyl-[protein] + diphosphate. The enzyme catalyses L-seryl-[protein] + UTP = O-(5'-uridylyl)-L-seryl-[protein] + diphosphate. It carries out the reaction L-tyrosyl-[protein] + UTP = O-(5'-uridylyl)-L-tyrosyl-[protein] + diphosphate. In terms of biological role, nucleotidyltransferase involved in the post-translational modification of proteins. It can catalyze the addition of adenosine monophosphate (AMP) or uridine monophosphate (UMP) to a protein, resulting in modifications known as AMPylation and UMPylation. This is Protein nucleotidyltransferase YdiU from Halalkalibacterium halodurans (strain ATCC BAA-125 / DSM 18197 / FERM 7344 / JCM 9153 / C-125) (Bacillus halodurans).